The chain runs to 512 residues: Cytochrome P450 monooxygenase 208 (512 aa).

The helical transmembrane segment at leucine 4–tyrosine 24 threads the bilayer. Cysteine 438 contacts heme.

The protein belongs to the cytochrome P450 family. Requires heme as cofactor.

The protein resides in the membrane. It participates in secondary metabolite biosynthesis. Functionally, cytochrome P450 monooxygenase that is able to use 7-ethoxycoumarin as a substrate for oxidation. This Postia placenta (strain ATCC 44394 / Madison 698-R) (Brown rot fungus) protein is Cytochrome P450 monooxygenase 208.